The primary structure comprises 552 residues: Glutamine--tRNA ligase (552 aa).

The 'HIGH' region signature appears at 33–43 (PEPNGYLHIGH). ATP-binding positions include 34-36 (EPN) and 40-46 (HIGHAKS). Residues Asp66 and Tyr210 each contribute to the L-glutamine site. Residues Thr229, 259–260 (RL), and 267–269 (MSK) each bind ATP. A 'KMSKS' region motif is present at residues 266–270 (VMSKR).

It belongs to the class-I aminoacyl-tRNA synthetase family. As to quaternary structure, monomer.

The protein localises to the cytoplasm. The catalysed reaction is tRNA(Gln) + L-glutamine + ATP = L-glutaminyl-tRNA(Gln) + AMP + diphosphate. This chain is Glutamine--tRNA ligase, found in Clostridium perfringens (strain ATCC 13124 / DSM 756 / JCM 1290 / NCIMB 6125 / NCTC 8237 / Type A).